An 893-amino-acid polypeptide reads, in one-letter code: NEDD4-binding protein 1 (893 aa).

In terms of domain architecture, KH-like spans 59–143; that stretch reads QEAVHSAKEY…IQQFVKLFES (85 aa). A disordered region spans residues 213 to 243; it reads EYTQSAATGPSSARDEVVVQEDSRNKARTPV. A compositionally biased stretch (polar residues) spans 214–223; the sequence is YTQSAATGPS. A compositionally biased stretch (basic and acidic residues) spans 225-237; it reads ARDEVVVQEDSRN. Thr-241 is modified (phosphothreonine). Ser-257, Ser-269, and Ser-299 each carry phosphoserine. 3 disordered regions span residues 273–339, 394–433, and 472–564; these read DALS…DGKD, RDFPPCTVYPDASQSRNAGVGSTTNELTADSTPKKAQSHT, and IWGS…PPLP. Polar residues-rich tracts occupy residues 405–433 and 523–537; these read ASQSRNAGVGSTTNELTADSTPKKAQSHT and GFQQQTEPLLPNNTK. Residues 551–564 show a composition bias toward pro residues; that stretch reads QPKPNYPPLSPPLP. The residue at position 560 (Ser-560) is a Phosphoserine. Residues 615–767 enclose the RNase NYN domain; the sequence is LKHIVIDGSN…LGRNGPRLEE (153 aa). Positions 793–820 are disordered; that stretch reads PGFRSPSTQVANNSHQPPPRIQTSSSPW. Over residues 797-820 the composition is skewed to polar residues; the sequence is SPSTQVANNSHQPPPRIQTSSSPW. The coCUN stretch occupies residues 846-893; the sequence is RSSAETSELREALLKIFPDSEQKLKIDQILAAHPYMKDLNALSALVLD.

It belongs to the N4BP1 family. In terms of assembly, interacts with NEDD4. Interacts with ITCH (via WW domain 2). Post-translationally, proteolytically cleaved by CASP8 downstream of TLR3 or TLR4, leading to its inactivation. Mainly cleaved at Asp-488 by CASP8. Cleaved by caspase-like protein MALT1, leading to its inactivation. In terms of processing, mono- and polyubiquitinated on the CoCUN region. Monoubiquitinated by NEDD4. Polyubiquitinated, leading to its degradation by the proteasome. Sumoylated with SUMO1, abrogating polyubiquitination and subsequent degradation. Desumoylated by SENP1, leading to accumulation in PML nuclear bodies.

Its subcellular location is the cytoplasm. The protein localises to the cytosol. The protein resides in the nucleus. It localises to the nucleolus. It is found in the PML body. Proteolytic cleavage by CASP8 or MALT1 leads to its inactivation. Functionally, potent suppressor of cytokine production that acts as a regulator of innate immune signaling and inflammation. Acts as a key negative regulator of select cytokine and chemokine responses elicited by TRIF-independent Toll-like receptors (TLRs), thereby limiting inflammatory cytokine responses to minor insults. In response to more threatening pathogens, cleaved by CASP8 downstream of TLR3 or TLR4, leading to its inactivation, thereby allowing production of inflammatory cytokines. Acts as a restriction factor against some viruses: restricts viral replication by binding to mRNA viruses and mediating their degradation via its ribonuclease activity. Also acts as an inhibitor of the E3 ubiquitin-protein ligase ITCH: acts by interacting with the second WW domain of ITCH, leading to compete with ITCH's substrates and impairing ubiquitination of substrates. The protein is NEDD4-binding protein 1 of Mus musculus (Mouse).